Here is a 99-residue protein sequence, read N- to C-terminus: Large ribosomal subunit protein eL21 (99 aa).

It belongs to the eukaryotic ribosomal protein eL21 family.

The polypeptide is Large ribosomal subunit protein eL21 (Ignicoccus hospitalis (strain KIN4/I / DSM 18386 / JCM 14125)).